The sequence spans 491 residues: UDP-GalNAc:beta-1,3-N-acetylgalactosaminyltransferase 2 (491 aa).

Over 1–2 (MR) the chain is Cytoplasmic. The chain crosses the membrane as a helical; Signal-anchor for type II membrane protein span at residues 3–23 (SAAAALSVCVLAVLLHWICWT). Topologically, residues 24 to 491 (DRSAELLGFR…NKCGDPCGCS (468 aa)) are lumenal. Residues Asn-167 and Asn-230 are each glycosylated (N-linked (GlcNAc...) asparagine).

Belongs to the glycosyltransferase 31 family.

The protein resides in the golgi apparatus membrane. It localises to the endoplasmic reticulum. The enzyme catalyses 3-O-(N-acetyl-beta-D-glucosaminyl-(1-&gt;4)-alpha-D-mannosyl)-L-threonyl-[protein] + UDP-N-acetyl-alpha-D-galactosamine = 3-O-[beta-D-GalNAc-(1-&gt;3)-beta-D-GlcNAc-(1-&gt;4)-alpha-D-Man]-L-Thr-[protein] + UDP + H(+). The protein operates within protein modification; protein glycosylation. In terms of biological role, beta-1,3-N-acetylgalactosaminyltransferase that synthesizes a unique carbohydrate structure, GalNAc-beta-1-3GlcNAc, on N- and O-glycans. Has no galactose nor galactosaminyl transferase activity toward any acceptor substrate. Involved in alpha-dystroglycan (dag1) glycosylation. The protein is UDP-GalNAc:beta-1,3-N-acetylgalactosaminyltransferase 2 (b3galnt2) of Danio rerio (Zebrafish).